The sequence spans 615 residues: MSKYTILDKINTPSDLKLIPESQLKILSAELRAFLVDTLDVSGGHFASSLGATELTVALHYVYNAPYDNIVWDVGHQTYIHKILTGRKDKLVTIKKDGGISGFPKRSESEYDTFGVGHSSTSISAALGMAIADRLQGKSSNTVAVIGDGAITGGMAFEALNHAGGIKEDILVILNDNEMSISDNVGGLSAHFSKIISGGFYNSIREKGKEVLKNIPPIFEFVKKVETQTKGMFVPANFFEDLGFYYVGPIDGHDVTELVKTLRILKDHKGPKLLHVITKKGKGYTKAESDPIKFHHVAPSFHSGENITTKISKPTYSNIFGDWICQKAAKDKRLVGITPAMKEGSDLIRFSQLYPHRYFDVAIAEQHAVTFAGGLACQGLKPVVAIYSTFLQRAYDQVIHDIALQNLDVLYAVDRAGLVGADGATHDGSFDLAFMRCIPNHVIMTPSDENEAYHMLEFGYEYNGPAMVRYPRGAGIGAEITGSLDLELGKAKIVKQGSKIAILNFGTLLPLAKQLAEKYHATVIDMRFVKPLDEIMLDKVSQTHEIILTLEENCIAGGAGSAVNEYFVAKDLSNKIIVRNFGLQDKFLNHGTKDLLLAQSKLCVENISQELDKLI.

Thiamine diphosphate-binding positions include His76 and 117–119; that span reads GHS. Asp148 contacts Mg(2+). Residues 149–150, Asn177, Tyr284, and Glu365 contribute to the thiamine diphosphate site; that span reads GA. Asn177 contacts Mg(2+).

It belongs to the transketolase family. DXPS subfamily. As to quaternary structure, homodimer. Requires Mg(2+) as cofactor. Thiamine diphosphate is required as a cofactor.

The enzyme catalyses D-glyceraldehyde 3-phosphate + pyruvate + H(+) = 1-deoxy-D-xylulose 5-phosphate + CO2. It functions in the pathway metabolic intermediate biosynthesis; 1-deoxy-D-xylulose 5-phosphate biosynthesis; 1-deoxy-D-xylulose 5-phosphate from D-glyceraldehyde 3-phosphate and pyruvate: step 1/1. Its function is as follows. Catalyzes the acyloin condensation reaction between C atoms 2 and 3 of pyruvate and glyceraldehyde 3-phosphate to yield 1-deoxy-D-xylulose-5-phosphate (DXP). The protein is 1-deoxy-D-xylulose-5-phosphate synthase of Francisella tularensis subsp. tularensis (strain FSC 198).